A 212-amino-acid polypeptide reads, in one-letter code: Phosphoribosyl-dephospho-CoA transferase (212 aa).

Active-site residues include Asp-139 and Asp-141.

This sequence belongs to the MdcG family.

It carries out the reaction apo-[malonate decarboxylase ACP] + 2'-(5''-triphospho-alpha-D-ribosyl)-3'-dephospho-CoA = holo-[malonate decarboxylase ACP] + diphosphate. Its function is as follows. Transfers 2'-(5-triphosphoribosyl)-3'-dephosphocoenzyme-A to the apo-[acyl-carrier-protein] of the malonate decarboxylase to yield holo-[acyl-carrier-protein]. This is Phosphoribosyl-dephospho-CoA transferase from Azotobacter vinelandii (strain DJ / ATCC BAA-1303).